The primary structure comprises 281 residues: Leukocyte antigen CD37 (281 aa).

Residues 1 to 17 (MSAQESCLSLIKYFLFV) lie on the Cytoplasmic side of the membrane. The chain crosses the membrane as a helical span at residues 18–38 (FNLFFFVLGGLIFCFGTWILI). The Extracellular segment spans residues 39 to 59 (DKTSFVSFVGLSFVPLQTWSK). Residues 60-74 (VLSVSGVLTMALALL) form a helical membrane-spanning segment. At 75–85 (GCVGALKELRC) the chain is on the cytoplasmic side. Residues 86 to 111 (LLGLYFGMLLLLFATQITLGILISTQ) traverse the membrane as a helical segment. The Extracellular segment spans residues 112 to 241 (RVRLERRVQE…RSLQKWLHNN (130 aa)). N-linked (GlcNAc...) asparagine glycans are attached at residues Asn-170, Asn-183, and Asn-188. The helical transmembrane segment at 242 to 266 (IISIVGICLGVGLLELGFMTLSIFL) threads the bilayer. The Cytoplasmic portion of the chain corresponds to 267–281 (CRNLDHVYDRLARYR).

This sequence belongs to the tetraspanin (TM4SF) family. In terms of assembly, interacts with SCIMP. Interacts with SOCS3. Interacts with DECTIN1/CLEC7A. In terms of processing, tyrosine phosphorylated; leading to activation of downstream signaling pathways. As to expression, B-lymphocytes.

The protein resides in the cell membrane. Functionally, structural component of specialized membrane microdomains known as tetraspanin-enriched microdomains (TERMs), which act as platforms for receptor clustering and signaling. Participates thereby in diverse biological functions such as cell signal transduction, adhesion, migration and protein trafficking. Upon ligand binding, two signaling pathways are activated, one acting through phosphorylation by LYN leading to cell death or a survival pathway with activation of GSK3B. Plays an essential role essential for clustering of integrin ITGA4/ITGB1 and promotes its mobility in the plasma membrane of B-cells. In turn, participates in ITGA4/ITGB1 integrin-mediated antiapoptotic signaling through AKT. Plays also a role in the migration of dendritic cells and neutrophils to draining lymph nodes, as well as in their integrin-mediated adhesion. Negatively regulates IL-6 responses through direct interaction with SOCS3 thereby preventing constitutive IL-6 signaling. Alternatively, inhibition of IL-6 signaling can also occur via interaction and stabilization of DECTIN1/CLEC7A at the cell membrane to inhibit its ability to promote the production of IL-6. The protein is Leukocyte antigen CD37 (Cd37) of Rattus norvegicus (Rat).